A 152-amino-acid polypeptide reads, in one-letter code: Interleukin-3 (152 aa).

Positions 1–19 (MSRLPVLLLLQLLVRPGLQ) are cleaved as a signal peptide. N-linked (GlcNAc...) asparagine glycosylation is found at Asn34 and Asn89. Cysteines 35 and 103 form a disulfide.

The protein belongs to the IL-3 family. Interacts with IL3RA. Activated T-cells, mast cells, natural killer cells.

It localises to the secreted. Functionally, cytokine secreted predominantly by activated T-lymphocytes as well as mast cells and osteoblastic cells that controls the production and differentiation of hematopoietic progenitor cells into lineage-restricted cells. Also stimulates mature basophils, eosinophils, and monocytes to become functionally activated. In addition, plays an important role in neural cell proliferation and survival. Participates as well in bone homeostasis and inhibits osteoclast differentiation by preventing NF-kappa-B nuclear translocation and activation. Mechanistically, exerts its biological effects through a receptor composed of IL3RA subunit and a signal transducing subunit IL3RB. Receptor stimulation results in the rapid activation of JAK2 kinase activity leading to STAT5-mediated transcriptional program. Alternatively, contributes to cell survival under oxidative stress in non-hematopoietic systems by activating pathways mediated by PI3K/AKT and ERK. The protein is Interleukin-3 of Homo sapiens (Human).